We begin with the raw amino-acid sequence, 231 residues long: MILIEHILGNVKKDPVWREKLKDATFDLLILDQREAQKSRCRKSSTQGLDLGISLDRNVVLADGDVLAWDEETNVAVVVQINLRDVMVIDLSELKSRSPDELIKTCFELGHALGNQHWKAVTKHNEVYVPLTVATTMMDSVMRTHGFQHLPFRFVKGAEILPLLTNSEARLLFGGAEDTDTHVHVASPLDEPHGSGLHIHGIHSHEEGHSHGDHDHDHSHSHGDHDHDHKH.

Positions 185-231 (VASPLDEPHGSGLHIHGIHSHEEGHSHGDHDHDHSHSHGDHDHDHKH) are disordered. Basic and acidic residues predominate over residues 203–231 (HSHEEGHSHGDHDHDHSHSHGDHDHDHKH).

The protein belongs to the UreE family.

Its subcellular location is the cytoplasm. In terms of biological role, involved in urease metallocenter assembly. Binds nickel. Probably functions as a nickel donor during metallocenter assembly. The polypeptide is Urease accessory protein UreE (Yersinia pestis bv. Antiqua (strain Antiqua)).